A 58-amino-acid polypeptide reads, in one-letter code: Conotoxin TxXIIIA (58 aa).

Residues 1 to 22 (MRCLPVFVILLLLIASVPSVDA) form the signal peptide. Positions 23 to 46 (ELKAKDDMPQASFHDNAERDQQKK) are excised as a propeptide.

Homodimer; disulfide-linked. In terms of processing, 5 disulfide bonds are present in each homodimer: two intrachain disulfide bonds per subunit, and one interchain disulfide bond linking the two subunits. Expressed by the venom duct.

It is found in the secreted. This is Conotoxin TxXIIIA from Conus textile (Cloth-of-gold cone).